Consider the following 508-residue polypeptide: Replication factor C large subunit (508 aa).

An ATP-binding site is contributed by 43–50 (GSPGIGKT). Positions 425–508 (AVEHSGGVFE…DQQSGLSDFM (84 aa)) are disordered. Acidic residues-rich tracts occupy residues 443 to 461 (GDSDADGDAPDTDAGEESG) and 483 to 500 (TTDDETETASEAAEDDDQ).

The protein belongs to the activator 1 small subunits family. RfcL subfamily. Heteromultimer composed of small subunits (RfcS) and large subunits (RfcL).

Its function is as follows. Part of the RFC clamp loader complex which loads the PCNA sliding clamp onto DNA. In Haloarcula marismortui (strain ATCC 43049 / DSM 3752 / JCM 8966 / VKM B-1809) (Halobacterium marismortui), this protein is Replication factor C large subunit.